Consider the following 62-residue polypeptide: Large ribosomal subunit protein bL28 (62 aa).

The segment at 1–27 (MARECYITGRKARSGNKRSHAMNKSKR) is disordered. Positions 10-27 (RKARSGNKRSHAMNKSKR) are enriched in basic residues.

This sequence belongs to the bacterial ribosomal protein bL28 family.

The chain is Large ribosomal subunit protein bL28 from Shouchella clausii (strain KSM-K16) (Alkalihalobacillus clausii).